Reading from the N-terminus, the 280-residue chain is Acetylglutamate kinase (280 aa).

Substrate-binding positions include 57–58, arginine 79, and asparagine 174; that span reads GG.

Belongs to the acetylglutamate kinase family. ArgB subfamily.

The protein resides in the cytoplasm. The enzyme catalyses N-acetyl-L-glutamate + ATP = N-acetyl-L-glutamyl 5-phosphate + ADP. Its pathway is amino-acid biosynthesis; L-arginine biosynthesis; N(2)-acetyl-L-ornithine from L-glutamate: step 2/4. In terms of biological role, catalyzes the ATP-dependent phosphorylation of N-acetyl-L-glutamate. The protein is Acetylglutamate kinase of Helicobacter hepaticus (strain ATCC 51449 / 3B1).